A 449-amino-acid polypeptide reads, in one-letter code: MGHLVSAVETAKLLLSRCHSLSITVLIFNNSVVTSKVHNYVDSQIASSSNRLRFIYLPRDETGISSFSSLIEKQKPHVKESVMKITEFGSSVESPRLVGFIVDMFCTAMIDVANEFGVPSYIFYTSGAAFLNFMLHVQKIHDEENFNPTEFNASDGELQVPGLVNSFPSKAMPTAILSKQWFPPLLENTRRYGEAKGVIINTFFELESHAIESFKDPPIYPVGPILDVRSNGRNTNQEIMQWLDDQPPSSVVFLCFGSNGSFSKDQVKEIACALEDSGHRFLWSLADHRAPGFLESPSDYEDLQEVLPEGFLERTSGIEKVIGWAPQVAVLAHPATGGLVSHSGWNSILESIWFGVPVATWPMYAEQQFNAFQMVIELGLAVEIKMDYRNDSGEIVKCDQIERGIRCLMKHDSDRRKKVKEMSEKSRGALMEGGSSYCWLDNLIKDMIK.

His3 acts as the Proton acceptor in catalysis. His3 is a binding site for an anthocyanidin. Catalysis depends on Asp103, which acts as the Charge relay. Positions 125, 325, 327, 342, 345, 346, 347, and 350 each coordinate UDP-alpha-D-glucose. Ala365 is a binding site for an anthocyanidin. Positions 366 and 367 each coordinate UDP-alpha-D-glucose.

Belongs to the UDP-glycosyltransferase family. As to expression, expressed in cotyledons and roots, but not in leaves.

The enzyme catalyses an anthocyanidin + UDP-alpha-D-glucose + H(+) = an anthocyanidin 3-O-beta-D-glucoside + UDP. Its pathway is pigment biosynthesis; anthocyanin biosynthesis. In terms of biological role, in the presence of other necessary color factors, this glycosylation reaction allows the accumulation of anthocyanin pigments. The protein is Anthocyanidin 3-O-glucosyltransferase 1 (GT1) of Manihot esculenta (Cassava).